Here is a 752-residue protein sequence, read N- to C-terminus: Polyribonucleotide nucleotidyltransferase (752 aa).

Mg(2+) is bound by residues Asp542 and Asp548. Residues 608–667 (PRITTIQIPVSKIGELIGPKGKNINALTEETGANISIEDDGTVFISAASGEAAEAAIEKI) enclose the KH domain. Residues 679 to 748 (GERFLGTVVK…NRGKISLVPV (70 aa)) form the S1 motif domain.

Belongs to the polyribonucleotide nucleotidyltransferase family. Mg(2+) serves as cofactor.

The protein localises to the cytoplasm. The enzyme catalyses RNA(n+1) + phosphate = RNA(n) + a ribonucleoside 5'-diphosphate. Involved in mRNA degradation. Catalyzes the phosphorolysis of single-stranded polyribonucleotides processively in the 3'- to 5'-direction. The chain is Polyribonucleotide nucleotidyltransferase from Corynebacterium efficiens (strain DSM 44549 / YS-314 / AJ 12310 / JCM 11189 / NBRC 100395).